The chain runs to 319 residues: Ribonucleoside-diphosphate reductase 2 subunit beta (319 aa).

Positions 67, 98, and 101 each coordinate Fe cation. The active site involves Tyr105. 3 residues coordinate Fe cation: Glu158, Glu192, and His195.

The protein belongs to the ribonucleoside diphosphate reductase small chain family. Tetramer of two alpha and two beta subunits. It depends on Fe cation as a cofactor.

The enzyme catalyses a 2'-deoxyribonucleoside 5'-diphosphate + [thioredoxin]-disulfide + H2O = a ribonucleoside 5'-diphosphate + [thioredoxin]-dithiol. Its function is as follows. Provides the precursors necessary for DNA synthesis. Catalyzes the biosynthesis of deoxyribonucleotides from the corresponding ribonucleotides. R2F contains the tyrosyl radical required for catalysis. The polypeptide is Ribonucleoside-diphosphate reductase 2 subunit beta (nrdF) (Escherichia coli (strain K12)).